The primary structure comprises 168 residues: Peptide deformylase (168 aa).

Fe cation contacts are provided by Cys92 and His134. Glu135 is an active-site residue. Fe cation is bound at residue His138.

This sequence belongs to the polypeptide deformylase family. The cofactor is Fe(2+).

It carries out the reaction N-terminal N-formyl-L-methionyl-[peptide] + H2O = N-terminal L-methionyl-[peptide] + formate. Its function is as follows. Removes the formyl group from the N-terminal Met of newly synthesized proteins. Requires at least a dipeptide for an efficient rate of reaction. N-terminal L-methionine is a prerequisite for activity but the enzyme has broad specificity at other positions. The sequence is that of Peptide deformylase from Stutzerimonas stutzeri (strain A1501) (Pseudomonas stutzeri).